The following is a 238-amino-acid chain: Ribosomal RNA large subunit methyltransferase E (238 aa).

Positions 85, 87, 113, 129, and 153 each coordinate S-adenosyl-L-methionine. Catalysis depends on Lys193, which acts as the Proton acceptor.

The protein belongs to the class I-like SAM-binding methyltransferase superfamily. RNA methyltransferase RlmE family.

It localises to the cytoplasm. The enzyme catalyses uridine(2552) in 23S rRNA + S-adenosyl-L-methionine = 2'-O-methyluridine(2552) in 23S rRNA + S-adenosyl-L-homocysteine + H(+). Specifically methylates the uridine in position 2552 of 23S rRNA at the 2'-O position of the ribose in the fully assembled 50S ribosomal subunit. In Ruegeria sp. (strain TM1040) (Silicibacter sp.), this protein is Ribosomal RNA large subunit methyltransferase E.